A 250-amino-acid polypeptide reads, in one-letter code: Isoprenyl transferase (250 aa).

Asp27 is a catalytic residue. Asp27 is a Mg(2+) binding site. Substrate is bound by residues 28–31 (GNRR), Trp32, His48, and 76–78 (STE). Asn79 acts as the Proton acceptor in catalysis. Substrate is bound by residues Phe80, Arg82, Arg199, and 205 to 207 (RVS). Glu218 contacts Mg(2+).

Belongs to the UPP synthase family. In terms of assembly, homodimer. Requires Mg(2+) as cofactor.

Functionally, catalyzes the condensation of isopentenyl diphosphate (IPP) with allylic pyrophosphates generating different type of terpenoids. In Chlamydia abortus (strain DSM 27085 / S26/3) (Chlamydophila abortus), this protein is Isoprenyl transferase.